Consider the following 7839-residue polypeptide: Nonribosomal peptide synthetase GRA1 (7839 aa).

Positions 1–23 (MALLNGKSTLPNGHNSSIESPNG) are enriched in polar residues. The segment at 1-26 (MALLNGKSTLPNGHNSSIESPNGYTE) is disordered. Residues 264 to 650 (LASPNSCAVH…LGRIDDQVKI (387 aa)) form an adenylation 1 region. Residues 793-866 (SAEALVLRQL…LQAEMSEKKK (74 aa)) enclose the Carrier 1 domain. O-(pantetheine 4'-phosphoryl)serine is present on Ser-827. A condensation 1 region spans residues 916–1332 (DIYPASPLQE…ILSPSDVAQI (417 aa)). The interval 1351–1742 (FFTQVKRSPD…QRKDAQLKIR (392 aa)) is adenylation 2. In terms of domain architecture, Carrier 2 spans 1880 to 1957 (ELETEAERTM…AMSRQATVSD (78 aa)). The residue at position 1918 (Ser-1918) is an O-(pantetheine 4'-phosphoryl)serine. The segment at 1997 to 2413 (DLYPCTPFQE…LISPSDMETI (417 aa)) is condensation 2. The adenylation 3 stretch occupies residues 2432–2828 (FDRRLSQKHS…GRRDTQLKIR (397 aa)). Residues 2963–3040 (IPTTQMEWNL…DLAQAIVLDT (78 aa)) enclose the Carrier 3 domain. Ser-3001 bears the O-(pantetheine 4'-phosphoryl)serine mark. The tract at residues 3084 to 3496 (DIYPCTPLQD…QVDLISDSDH (413 aa)) is condensation 3. The tract at residues 3520 to 3923 (RLAVSNPDAE…GRRDSQVKLR (404 aa)) is adenylation 4. The region spanning 4057-4134 (RPLTEREKDL…DMAAMTTSLS (78 aa)) is the Carrier 4 domain. Ser-4095 bears the O-(pantetheine 4'-phosphoryl)serine mark. The tract at residues 4234–4569 (NLEEFVGRQS…MMNPDDAEEI (336 aa)) is condensation 4. Residues 4591–4982 (HSKGCPDRIA…VSRKDTQVKF (392 aa)) are adenylation 5. Residues 5113–5189 (ALSSDEESQL…DMALCMTSAQ (77 aa)) enclose the Carrier 5 domain. Ser-5150 is subject to O-(pantetheine 4'-phosphoryl)serine. A condensation 5 region spans residues 5224–5653 (EDIYPCSALQ…VSPSDQAEIL (430 aa)). The tract at residues 5671-6069 (FESRARLQPS…GRRDTQVKLR (399 aa)) is adenylation 6. Residues 6207–6282 (FPSSLAEQQM…HMAAIATTFT (76 aa)) form the Carrier 6 domain. The residue at position 6243 (Ser-6243) is an O-(pantetheine 4'-phosphoryl)serine. The segment at 6321 to 6730 (QDIYPCSALQ…RLADMDLTGP (410 aa)) is condensation 6. The tract at residues 6756–7147 (EQRVKSQPDS…LGRKDSQIKL (392 aa)) is adenylation 7. Positions 7290 to 7366 (KAATPNEKTL…DLARVSRQSI (77 aa)) constitute a Carrier 7 domain. Ser-7327 is subject to O-(pantetheine 4'-phosphoryl)serine. The interval 7404 to 7704 (HDIYPCTQVQ…LDYAKKRASS (301 aa)) is condensation7.

Belongs to the NRP synthetase family.

The protein operates within mycotoxin biosynthesis. Nonribosomal peptide synthetase; part of the gene cluster that mediates the biosynthesis of gramillins A and B, bicyclic lipopeptides that induce cell death in maize leaves but not in wheat leaves. The nonribosomal peptide synthetase GRA1 incorporates respectively a glutamic adic (Glu), a leucine (Leu), a serine (Ser), a hydroxyglutamine (HOGln), a 2-amino decanoic acid, and 2 cysteins (CysB and CysA). The biosynthesis of 2-amino decanoic acid incorporated in gramillins could be initiated by a fatty acid synthase composed of the alpha and beta subunits FGSG_00036 and FGSG_11656. The cytochrome P450 monooxygenase FGSG_15680 could hydroxylate the fatty acid chain. Subsequent oxidation to the ketone by the oxidoreductase FGSG_00048 and transamination by aminotransferase FGSG_00049 could form 2-amino-decanoic acid. On the other hand, FGSG_15680 could also be responsible for the HO-modified glutamine at the gamma-position. Whether hydroxylation occurs on the fully assembled product or on the Gln residue prior to assembly into the gramillins requires further proof. The thioredoxin FGSG_00043 could also be required for the disulfide-bond formation between CysA and CysB. The specific involvement of the remaining proteins from the cluster is more difficult to discern, but could have broader regulatory (FGSG_00040 and FGSG_11657) or enzymatic functions (FGSG_00044 and FGSG_00045). The final C-domain of GRA1 does not possess the expected sequence of a termination CT domain, often implicated in macrocyclization and release of a cyclopeptidein fungal NRPs; and the thioesterase FGSG_00047 may act in concert with the terminal C-domain of GRA1 to catalyze the formation of the macrocyclic anhydride and release of the products. In Gibberella zeae (strain ATCC MYA-4620 / CBS 123657 / FGSC 9075 / NRRL 31084 / PH-1) (Wheat head blight fungus), this protein is Nonribosomal peptide synthetase GRA1.